The following is a 241-amino-acid chain: Probable histone-lysine N-methyltransferase set-23 (241 aa).

The region spanning 25 to 85 (QGCDCETQCS…SCRNKVVQNG (61 aa)) is the Pre-SET domain. Zn(2+) contacts are provided by Cys-27, Cys-29, Cys-33, Cys-39, Cys-41, Cys-64, Cys-68, Cys-70, and Cys-77. Residues 88 to 210 (KKLKIFSTSE…VGEELSYDYG (123 aa)) enclose the SET domain. S-adenosyl-L-methionine is bound by residues 98 to 100 (KGD), Asp-138, Tyr-140, Arg-167, and 170 to 171 (NH). Zn(2+) is bound by residues Cys-173, Cys-222, Cys-224, and Cys-229. The Post-SET domain occupies 218–234 (NRKLCLCRSENCRKYLP).

This sequence belongs to the class V-like SAM-binding methyltransferase superfamily. Histone-lysine methyltransferase family. Suvar3-9 subfamily.

The protein localises to the nucleus. It is found in the chromosome. It catalyses the reaction L-lysyl-[histone] + S-adenosyl-L-methionine = N(6)-methyl-L-lysyl-[histone] + S-adenosyl-L-homocysteine + H(+). Its function is as follows. Probable histone methyltransferase required for embryonic development. This chain is Probable histone-lysine N-methyltransferase set-23, found in Caenorhabditis briggsae.